The sequence spans 141 residues: MLTAEDKKLIQAIWDKVQGHQEDFGAEALQRMFITYPTTKTYFPHFDLSPGSDQVRSHGKKVVNALGNAVKSMDNLSQALSELSNLHAYNLRVDPVNFKLLSQCFQVVLAVHLGKEYTPEVHSAFDKFLSAVAAVLAEKYR.

The Globin domain occupies 1 to 141 (MLTAEDKKLI…VAAVLAEKYR (141 aa)). Residues His58 and His87 each contribute to the heme b site.

Belongs to the globin family. As to quaternary structure, heterotetramer of two alpha-D chains and two beta chains. Red blood cells.

Involved in oxygen transport from the lung to the various peripheral tissues. The protein is Hemoglobin subunit alpha-D (HBAD) of Accipiter gentilis (Northern goshawk).